A 269-amino-acid chain; its full sequence is Formamidopyrimidine-DNA glycosylase (269 aa).

The Schiff-base intermediate with DNA role is filled by proline 2. The active-site Proton donor is glutamate 3. Lysine 57 serves as the catalytic Proton donor; for beta-elimination activity. The DNA site is built by histidine 90, arginine 109, and arginine 150. Residues 235-269 (NVYGRAGQPCVQCDAILKADRHGQRSTAYCPQCQR) form an FPG-type zinc finger. The Proton donor; for delta-elimination activity role is filled by arginine 259.

This sequence belongs to the FPG family. As to quaternary structure, monomer. Zn(2+) is required as a cofactor.

The catalysed reaction is Hydrolysis of DNA containing ring-opened 7-methylguanine residues, releasing 2,6-diamino-4-hydroxy-5-(N-methyl)formamidopyrimidine.. The enzyme catalyses 2'-deoxyribonucleotide-(2'-deoxyribose 5'-phosphate)-2'-deoxyribonucleotide-DNA = a 3'-end 2'-deoxyribonucleotide-(2,3-dehydro-2,3-deoxyribose 5'-phosphate)-DNA + a 5'-end 5'-phospho-2'-deoxyribonucleoside-DNA + H(+). Involved in base excision repair of DNA damaged by oxidation or by mutagenic agents. Acts as a DNA glycosylase that recognizes and removes damaged bases. Has a preference for oxidized purines, such as 7,8-dihydro-8-oxoguanine (8-oxoG). Has AP (apurinic/apyrimidinic) lyase activity and introduces nicks in the DNA strand. Cleaves the DNA backbone by beta-delta elimination to generate a single-strand break at the site of the removed base with both 3'- and 5'-phosphates. The protein is Formamidopyrimidine-DNA glycosylase of Alcanivorax borkumensis (strain ATCC 700651 / DSM 11573 / NCIMB 13689 / SK2).